Here is a 307-residue protein sequence, read N- to C-terminus: Bidirectional sugar transporter SWEET11 (307 aa).

Residues 1–14 (MAGGFLSMANPAVT) lie on the Extracellular side of the membrane. Residues 15–35 (LSGVAGNIISFLVFLAPVATF) form a helical membrane-spanning segment. The MtN3/slv 1 domain maps to 17–100 (GVAGNIISFL…VLYLVYAPRR (84 aa)). The Cytoplasmic portion of the chain corresponds to 36–47 (LQVYKKKSTGGY). The helical transmembrane segment at 48-68 (SSVPYVVALFSSVLWIFYALV) threads the bilayer. Over 69 to 74 (KTNSRP) the chain is Extracellular. A helical membrane pass occupies residues 75-95 (LLTINAFGCGVEAAYIVLYLV). The Cytoplasmic segment spans residues 96–107 (YAPRRARLRTLA). A helical membrane pass occupies residues 108–128 (FFLLLDVAAFALIVVTTLYLV). At 129–135 (PKPHQVK) the chain is on the extracellular side. A helical transmembrane segment spans residues 136–156 (FLGSVCLAFSMAVFVAPLSII). The MtN3/slv 2 domain occupies 136 to 219 (FLGSVCLAFS…MGLYFWYRKP (84 aa)). Residues 157 to 168 (FKVIKTKSVEFM) are Cytoplasmic-facing. The helical transmembrane segment at 169-189 (PIGLSVCLTLSAVAWFCYGLF) threads the bilayer. Over 190 to 194 (TKDPY) the chain is Extracellular. A helical transmembrane segment spans residues 195 to 215 (VMYPNVGGFFFSCVQMGLYFW). The Cytoplasmic portion of the chain corresponds to 216–307 (YRKPRNTAVL…PEVIEITAAV (92 aa)).

It belongs to the SWEET sugar transporter family. As to quaternary structure, interacts with COPT1 and COPT2. Interacts with APX8. As to expression, mostly expressed in panicles and anthers. Also detected in leaves (leaf collar, leaf auricle, leaf ligule), roots, sheaths, culms and culm nodes.

It is found in the cell membrane. In terms of biological role, mediates both low-affinity uptake and efflux of sugar across the plasma membrane. Required for pollen viability. Involved in the transport of copper, in cooperation with COPT1 and COPT2. Confers sensitivity to bacterial blight mediated by X.oryzae pv. oryzae (Xoo) in its Xa13 allelic form (e.g. cv. IR24), probably by providing the sugar required for the pathogen growth, or by reducing copper contents in xylem. However, a recessive resistance can be associated with the xa13 allele (in which the promoter is mutated leading to reduced induction upon pathogen infection, e.g. cv. IRBB13), specifically toward Xoo Philippine race 6 and Indian race PXO8. The protein is Bidirectional sugar transporter SWEET11 (SWEET11) of Oryza sativa subsp. japonica (Rice).